The following is a 100-amino-acid chain: Urease subunit gamma (100 aa).

It belongs to the urease gamma subunit family. Heterotrimer of UreA (gamma), UreB (beta) and UreC (alpha) subunits. Three heterotrimers associate to form the active enzyme.

The protein localises to the cytoplasm. It catalyses the reaction urea + 2 H2O + H(+) = hydrogencarbonate + 2 NH4(+). Its pathway is nitrogen metabolism; urea degradation; CO(2) and NH(3) from urea (urease route): step 1/1. The polypeptide is Urease subunit gamma (Herpetosiphon aurantiacus (strain ATCC 23779 / DSM 785 / 114-95)).